Consider the following 96-residue polypeptide: Aspartyl/glutamyl-tRNA(Asn/Gln) amidotransferase subunit C (96 aa).

Belongs to the GatC family. As to quaternary structure, heterotrimer of A, B and C subunits.

It catalyses the reaction L-glutamyl-tRNA(Gln) + L-glutamine + ATP + H2O = L-glutaminyl-tRNA(Gln) + L-glutamate + ADP + phosphate + H(+). It carries out the reaction L-aspartyl-tRNA(Asn) + L-glutamine + ATP + H2O = L-asparaginyl-tRNA(Asn) + L-glutamate + ADP + phosphate + 2 H(+). Functionally, allows the formation of correctly charged Asn-tRNA(Asn) or Gln-tRNA(Gln) through the transamidation of misacylated Asp-tRNA(Asn) or Glu-tRNA(Gln) in organisms which lack either or both of asparaginyl-tRNA or glutaminyl-tRNA synthetases. The reaction takes place in the presence of glutamine and ATP through an activated phospho-Asp-tRNA(Asn) or phospho-Glu-tRNA(Gln). The protein is Aspartyl/glutamyl-tRNA(Asn/Gln) amidotransferase subunit C of Chloroflexus aurantiacus (strain ATCC 29366 / DSM 635 / J-10-fl).